The following is a 78-amino-acid chain: Beta-defensin 105A (78 aa).

A signal peptide spans 1 to 27; sequence MALIRKTFYFLFAVFFILVQLPSGCQA. 3 disulfides stabilise this stretch: cysteine 43–cysteine 74, cysteine 53–cysteine 67, and cysteine 57–cysteine 73.

It belongs to the beta-defensin family.

The protein resides in the secreted. Has antimicrobial activity. The polypeptide is Beta-defensin 105A (DEFB105A) (Gorilla gorilla gorilla (Western lowland gorilla)).